A 96-amino-acid chain; its full sequence is Cystatin (96 aa).

The Cystatin domain occupies 22-65 (DFIKAALNETGTHAGRKYKVLRSSQQVVAGMKYTFYIVFEDDES). An N-linked (GlcNAc...) asparagine glycan is attached at N29.

Belongs to the cystatin family. In terms of assembly, interacts with cathepsin L-like peptidase; the interaction results in inhibition of cathepsin L-like peptidase activity. Salivary gland. Midgut.

Its function is as follows. Cysteine proteinase inhibitor. Inhibits cathepsin L-like peptidase. Increases cell viability following apoptosis induction by staurosporine. Inhibits human cathepsin S (CTSS), human cathepsin L2 (CTSV), human cathepsin L (CTSL), human cathepsin B (CTSB) and papain. Functionally, (Microbial infection) Modulates dengue virus type 2 replication in salivary glands. This chain is Cystatin, found in Aedes aegypti (Yellowfever mosquito).